The chain runs to 438 residues: Exosome complex component RRP45B (438 aa).

Disordered regions lie at residues 293-322 (PTLAKSEVSGPTVAVKEEHRKSSDQERAAE) and 334-438 (STEE…KNKS). Basic and acidic residues-rich tracts occupy residues 307–322 (VKEEHRKSSDQERAAE) and 334–347 (STEEVRSSKEEEAA). Over residues 380–394 (TKSSSTKKMNGSGNA) the composition is skewed to polar residues. Basic and acidic residues predominate over residues 410–429 (LGKKDTKHKDGEMTLKDAVK).

This sequence belongs to the RNase PH family.

The protein localises to the cytoplasm. It localises to the nucleus. Its function is as follows. Probable 3'-&gt;5' exoribonuclease involved in the regulation of cuticular wax biosynthesis by controlling the expression of CER3. May act by degrading a specific mRNA species encoding a negative regulator of CER3 transcription. Can perform exosomal functions and complement the yeast rrp45 null mutant. The protein is Exosome complex component RRP45B of Arabidopsis thaliana (Mouse-ear cress).